A 468-amino-acid chain; its full sequence is Uronate isomerase (468 aa).

This sequence belongs to the metallo-dependent hydrolases superfamily. Uronate isomerase family.

The enzyme catalyses D-glucuronate = D-fructuronate. It catalyses the reaction aldehydo-D-galacturonate = keto-D-tagaturonate. It participates in carbohydrate metabolism; pentose and glucuronate interconversion. The protein is Uronate isomerase of Bacteroides thetaiotaomicron (strain ATCC 29148 / DSM 2079 / JCM 5827 / CCUG 10774 / NCTC 10582 / VPI-5482 / E50).